Here is a 174-residue protein sequence, read N- to C-terminus: Mitochondrial holo-[acyl-carrier-protein] synthase (174 aa).

This sequence belongs to the P-Pant transferase superfamily. AcpS family.

The protein localises to the mitochondrion. It catalyses the reaction apo-[ACP] + CoA = holo-[ACP] + adenosine 3',5'-bisphosphate + H(+). Its function is as follows. Transfers the 4'-phosphopantetheine moiety from coenzyme A to a Ser of mitochondrial acyl-carrier-protein. This is Mitochondrial holo-[acyl-carrier-protein] synthase (PPT2) from Eremothecium gossypii (strain ATCC 10895 / CBS 109.51 / FGSC 9923 / NRRL Y-1056) (Yeast).